Here is a 331-residue protein sequence, read N- to C-terminus: Laforin (331 aa).

One can recognise a CBM20 domain in the interval 1–124 (MRFRFGVVVP…NNLVDGVYCL (124 aa)). The residue at position 25 (serine 25) is a Phosphoserine; by AMPK. Substrate-binding positions include tryptophan 32, lysine 87, 103–107 (GPHHD), aspartate 197, aspartate 235, and arginine 241. A Tyrosine-protein phosphatase domain is found at 156 to 323 (HYSRILPNIW…EEDFFQKFGK (168 aa)). The active-site Phosphocysteine intermediate is cysteine 266. The Glucan phosphatase signature motif CXAGXGR motif lies at 266-272 (CNAGVGR). Residues 267–272 (NAGVGR) and tyrosine 304 each bind substrate.

This sequence belongs to the protein-tyrosine phosphatase family. Homodimer. Interacts with itself. Interacts with PPP1R3B, PPP1R3C, PPP1R3D, HIRIP5, and EPM2AIP1. Binds glycogen and Lafora bodies. Interacts with NHLRC1/malin (via the NHL repeats). Forms a complex with NHLRC1/malin and HSP70. Interacts with PPP1R3D; in the presence of NHLC1/malin the interaction leads to ubiquitination and autophagic degradation of PPP1R3D. Interacts (via the phosphatase domain) with MAPT/Tau; the interaction dephosphorylates MAPT. Interacts with PRDM8. Polyubiquitinated by NHLRC1/malin. In terms of processing, phosphorylation on Ser-25 by AMPK affects the phosphatase activity of the enzyme and its ability to homodimerize and interact with NHLRC1, PPP1R3C or PRKAA2.

The protein localises to the cytoplasm. The protein resides in the endoplasmic reticulum membrane. Its subcellular location is the cell membrane. It catalyses the reaction O-phospho-L-tyrosyl-[protein] + H2O = L-tyrosyl-[protein] + phosphate. The catalysed reaction is O-phospho-L-seryl-[protein] + H2O = L-seryl-[protein] + phosphate. It carries out the reaction O-phospho-L-threonyl-[protein] + H2O = L-threonyl-[protein] + phosphate. In terms of biological role, plays an important role in preventing glycogen hyperphosphorylation and the formation of insoluble aggregates, via its activity as glycogen phosphatase, and by promoting the ubiquitination of proteins involved in glycogen metabolism via its interaction with the E3 ubiquitin ligase NHLRC1/malin. Dephosphorylates phosphotyrosine and synthetic substrates, such as para-nitrophenylphosphate (pNPP), and has low activity with phosphoserine and phosphothreonine substrates (in vitro). Has also been shown to dephosphorylate MAPT. Shows strong phosphatase activity towards complex carbohydrates in vitro, avoiding glycogen hyperphosphorylation which is associated with reduced branching and formation of insoluble aggregates. Forms a complex with NHLRC1/malin and HSP70, which suppresses the cellular toxicity of misfolded proteins by promoting their degradation through the ubiquitin-proteasome system (UPS). Acts as a scaffold protein to facilitate PPP1R3C/PTG ubiquitination by NHLRC1/malin. Also promotes proteasome-independent protein degradation through the macroautophagy pathway. The polypeptide is Laforin (EPM2A) (Canis lupus familiaris (Dog)).